The following is a 289-amino-acid chain: Aquaporin-2 (289 aa).

The disordered stretch occupies residues 1–36 (MSNESNDLEKNISHLDPTGVDNAYIPPEQPETKHSR). Over 1-47 (MSNESNDLEKNISHLDPTGVDNAYIPPEQPETKHSRFNIDRDTLRNH) the chain is Cytoplasmic. The helical transmembrane segment at 48–68 (FIAAVGEFCGTFMFLWCAYVI) threads the bilayer. Residues 69 to 90 (CNVANHDVALTTEPEGSHPGQL) lie on the Extracellular side of the membrane. Residues 91-111 (IMIALGFGFSVMFSIWCFAGV) traverse the membrane as a helical segment. Residues 112–135 (SGGALNPAVSLSLCLARAISPARC) are Cytoplasmic-facing. The NPA 1 signature appears at 117-119 (NPA). The helical transmembrane segment at 136–156 (VVMWFPQIIAGMAAGGAASAM) threads the bilayer. The Extracellular portion of the chain corresponds to 157–175 (TPGKVLFTNALGLGCSRSR). Residues 176 to 196 (GLFLEMFGTAVLCLTVLMTAV) form a helical membrane-spanning segment. At 197–202 (EKRETN) the chain is on the cytoplasmic side. Residues 203–223 (FMAALPIGISLFMAHMALTGY) form a helical membrane-spanning segment. The Extracellular portion of the chain corresponds to 224–247 (TGTGVNPARSLGAAVAARYFPHYH). Positions 229–231 (NPA) match the NPA 2 motif. The helical transmembrane segment at 248 to 268 (WIYWIGPLLGAFLAWSVWQLL) threads the bilayer. Residues 269–289 (QILDYTTYVNAEKAAGQKKED) are Cytoplasmic-facing.

The protein belongs to the MIP/aquaporin (TC 1.A.8) family.

Its subcellular location is the endoplasmic reticulum membrane. The protein resides in the cell membrane. In terms of biological role, water channel required to facilitate the transport of water across membranes. Involved in freeze tolerance, osmotolerance and cell flocculation in liquid cultures. Is non-functional in most laboratory strains. The sequence is that of Aquaporin-2 (AQY2) from Saccharomyces cerevisiae (Baker's yeast).